The primary structure comprises 326 residues: tRNA-modifying protein YgfZ (326 aa).

The folate site is built by Trp27 and Trp189.

The protein belongs to the tRNA-modifying YgfZ family.

The protein localises to the cytoplasm. Functionally, folate-binding protein involved in regulating the level of ATP-DnaA and in the modification of some tRNAs. It is probably a key factor in regulatory networks that act via tRNA modification, such as initiation of chromosomal replication. The sequence is that of tRNA-modifying protein YgfZ from Salmonella paratyphi C (strain RKS4594).